The following is an 84-amino-acid chain: U8-theraphotoxin-Hhn1f (84 aa).

The signal sequence occupies residues Met-1–Cys-21. 5 cysteine pairs are disulfide-bonded: Cys-23-Cys-35, Cys-29-Cys-44, Cys-34-Cys-67, Cys-54-Cys-75, and Cys-69-Cys-81.

The protein belongs to the AVIT (prokineticin) family. In terms of tissue distribution, expressed by the venom gland.

It localises to the secreted. This Cyriopagopus hainanus (Chinese bird spider) protein is U8-theraphotoxin-Hhn1f.